We begin with the raw amino-acid sequence, 270 residues long: NADPH-dependent aldehyde reductase-like protein, chloroplastic (270 aa).

A chloroplast-targeting transit peptide spans 1–53; the sequence is MSTHSSISQPPLPLAGRVAIVTGSSRGIGRAIAIHLAELGARIVINYTSKAAD. An NADP(+)-binding site is contributed by 26-50; the sequence is RGIGRAIAIHLAELGARIVINYTSK. S165 serves as a coordination point for substrate. Y178 (proton acceptor) is an active-site residue.

The protein belongs to the short-chain dehydrogenases/reductases (SDR) family.

The protein resides in the plastid. It localises to the chloroplast. Functionally, aldehyde reductase that catalyzes the reduction of the aldehyde carbonyl groups on saturated and alpha,beta-unsaturated aldehydes with more than 5 carbons. This chain is NADPH-dependent aldehyde reductase-like protein, chloroplastic, found in Arabidopsis thaliana (Mouse-ear cress).